Here is a 368-residue protein sequence, read N- to C-terminus: MLSQIQRFGGAMFTPVLLFPFAGIVVGLAILLQNPMFVGESLTDPNSLFAQIVHIIEEGGWTVFRNMPLIFAVGLPIGLAKQAQGRACLAVMVSFLTWNYFINAMGMTWGSYFGVDFTQDAVAGSGLTMMAGIKTLDTSIIGAIIISGIVTALHNRLFDKKLPVFLGIFQGTSYVVIIAFLVMIPCAWLTLLGWPKVQMGIESLQAFLRSAGALGVWVYTFLERILIPTGLHHFIYGQFIFGPAAVEGGIQMYWAQHLQEFSLSAEPLKSLFPEGGFALHGNSKIFGAVGISLAMYFTAAPENRVKVAGLLIPATLTAMLVGITEPLEFTFLFISPLLFAVHAVLAASMSTVMYLFGVVGNMGGGLID.

Residues 1 to 11 (MLSQIQRFGGA) lie on the Periplasmic side of the membrane. In terms of domain architecture, PTS EIIC type-1 spans 1–368 (MLSQIQRFGG…VGNMGGGLID (368 aa)). The helical transmembrane segment at 12–32 (MFTPVLLFPFAGIVVGLAILL) threads the bilayer. At 33-59 (QNPMFVGESLTDPNSLFAQIVHIIEEG) the chain is on the cytoplasmic side. A helical membrane pass occupies residues 60-80 (GWTVFRNMPLIFAVGLPIGLA). Topologically, residues 81–86 (KQAQGR) are periplasmic. Residues 87 to 107 (ACLAVMVSFLTWNYFINAMGM) traverse the membrane as a helical segment. Residues 108–129 (TWGSYFGVDFTQDAVAGSGLTM) are Cytoplasmic-facing. The helical transmembrane segment at 130 to 150 (MAGIKTLDTSIIGAIIISGIV) threads the bilayer. Over 151–173 (TALHNRLFDKKLPVFLGIFQGTS) the chain is Periplasmic. The chain crosses the membrane as a helical span at residues 174 to 194 (YVVIIAFLVMIPCAWLTLLGW). The Cytoplasmic portion of the chain corresponds to 195 to 198 (PKVQ). The helical transmembrane segment at 199–221 (MGIESLQAFLRSAGALGVWVYTF) threads the bilayer. Residues 222–224 (LER) are Periplasmic-facing. A helical transmembrane segment spans residues 225–245 (ILIPTGLHHFIYGQFIFGPAA). Residues 246-276 (VEGGIQMYWAQHLQEFSLSAEPLKSLFPEGG) are Cytoplasmic-facing. Residues 277-297 (FALHGNSKIFGAVGISLAMYF) traverse the membrane as a helical segment. Topologically, residues 298 to 306 (TAAPENRVK) are periplasmic. Residues 307–327 (VAGLLIPATLTAMLVGITEPL) traverse the membrane as a helical segment. A topological domain (cytoplasmic) is located at residue Glu-328. Residues 329–349 (FTFLFISPLLFAVHAVLAASM) traverse the membrane as a helical segment. Over 350–368 (STVMYLFGVVGNMGGGLID) the chain is Periplasmic.

It localises to the cell inner membrane. Its function is as follows. The phosphoenolpyruvate-dependent sugar phosphotransferase system (PTS), a major carbohydrate active -transport system, catalyzes the phosphorylation of incoming sugar substrates concomitant with their translocation across the cell membrane. This operon may be cryptic in wild-type K12 strains. This chain is Phosphotransferase IIC component GlvC, found in Escherichia coli (strain K12).